The sequence spans 74 residues: Translation initiation factor IF-1 (74 aa).

Residues 1 to 72 (MSKQDLIEME…TKGRITYRLR (72 aa)) enclose the S1-like domain.

It belongs to the IF-1 family. In terms of assembly, component of the 30S ribosomal translation pre-initiation complex which assembles on the 30S ribosome in the order IF-2 and IF-3, IF-1 and N-formylmethionyl-tRNA(fMet); mRNA recruitment can occur at any time during PIC assembly.

The protein resides in the cytoplasm. Its function is as follows. One of the essential components for the initiation of protein synthesis. Stabilizes the binding of IF-2 and IF-3 on the 30S subunit to which N-formylmethionyl-tRNA(fMet) subsequently binds. Helps modulate mRNA selection, yielding the 30S pre-initiation complex (PIC). Upon addition of the 50S ribosomal subunit IF-1, IF-2 and IF-3 are released leaving the mature 70S translation initiation complex. This is Translation initiation factor IF-1 from Trichodesmium erythraeum (strain IMS101).